Reading from the N-terminus, the 429-residue chain is Adenylosuccinate synthetase (429 aa).

GTP-binding positions include Gly-13–Lys-19 and Gly-41–Thr-43. Residue Asp-14 is the Proton acceptor of the active site. Residues Asp-14 and Gly-41 each coordinate Mg(2+). IMP-binding positions include Asp-14–Lys-17, Asn-39–His-42, Thr-130, Arg-144, Gln-225, Thr-240, and Arg-304. His-42 (proton donor) is an active-site residue. Ala-300–Arg-306 provides a ligand contact to substrate. GTP contacts are provided by residues Arg-306, Lys-332–Asp-334, and Ser-413–Gly-415.

The protein belongs to the adenylosuccinate synthetase family. As to quaternary structure, homodimer. Mg(2+) serves as cofactor.

It is found in the cytoplasm. It catalyses the reaction IMP + L-aspartate + GTP = N(6)-(1,2-dicarboxyethyl)-AMP + GDP + phosphate + 2 H(+). Its pathway is purine metabolism; AMP biosynthesis via de novo pathway; AMP from IMP: step 1/2. Its function is as follows. Plays an important role in the de novo pathway of purine nucleotide biosynthesis. Catalyzes the first committed step in the biosynthesis of AMP from IMP. The sequence is that of Adenylosuccinate synthetase from Pseudomonas fluorescens (strain SBW25).